A 273-amino-acid chain; its full sequence is Polyamine aminopropyltransferase (273 aa).

The 234-residue stretch at 5–238 (ENWFSERYSD…GFWSFTIASE (234 aa)) folds into the PABS domain. An S-methyl-5'-thioadenosine-binding site is contributed by glutamine 34. Residues histidine 65 and aspartate 90 each contribute to the spermidine site. S-methyl-5'-thioadenosine is bound by residues glutamate 109 and 140-141 (DG). Aspartate 158 serves as the catalytic Proton acceptor. Position 158 to 161 (158 to 161 (DSTD)) interacts with spermidine. Residue proline 165 coordinates S-methyl-5'-thioadenosine.

This sequence belongs to the spermidine/spermine synthase family. As to quaternary structure, homodimer or homotetramer.

It localises to the cytoplasm. It catalyses the reaction S-adenosyl 3-(methylsulfanyl)propylamine + putrescine = S-methyl-5'-thioadenosine + spermidine + H(+). It participates in amine and polyamine biosynthesis; spermidine biosynthesis; spermidine from putrescine: step 1/1. Catalyzes the irreversible transfer of a propylamine group from the amino donor S-adenosylmethioninamine (decarboxy-AdoMet) to putrescine (1,4-diaminobutane) to yield spermidine. This chain is Polyamine aminopropyltransferase, found in Thermoplasma volcanium (strain ATCC 51530 / DSM 4299 / JCM 9571 / NBRC 15438 / GSS1).